The primary structure comprises 458 residues: Argininosuccinate lyase (458 aa).

Belongs to the lyase 1 family. Argininosuccinate lyase subfamily.

The protein resides in the cytoplasm. The enzyme catalyses 2-(N(omega)-L-arginino)succinate = fumarate + L-arginine. The protein operates within amino-acid biosynthesis; L-arginine biosynthesis; L-arginine from L-ornithine and carbamoyl phosphate: step 3/3. In Neisseria meningitidis serogroup A / serotype 4A (strain DSM 15465 / Z2491), this protein is Argininosuccinate lyase.